Consider the following 615-residue polypeptide: Envelope glycoprotein (615 aa).

An N-terminal signal peptide occupies residues Met-1–Trp-84. At Ala-85–Arg-378 the chain is on the extracellular side. N-linked (GlcNAc...) asparagine; by host glycosylation is found at Asn-108, Asn-127, Asn-178, Asn-219, Asn-275, and Asn-319. The helical transmembrane segment at Gly-379 to Val-402 threads the bilayer. Over Ser-403–Pro-615 the chain is Cytoplasmic. Coiled coils occupy residues Ala-411–Lys-461 and Ile-495–Asn-531. The segment at Tyr-590–Met-593 is required for cell transformation.

As to quaternary structure, interacts with sheep HYAL2 receptor.

Its subcellular location is the virion membrane. In terms of biological role, the envelope proteins induce cell transformation leading to ovine pulmonary adenocarcinoma (OPA), a contagious lung cancer of sheep and goat. They bind to the HYAL2 receptor for cell entry. Env proteins probably do not act as oncogenes by themselves, but may rather liberate an oncogenic factor that would normally be negatively regulated. One mechanism of transformation seems to involve activation of the phosphoinositide-3-OH kinase (PI3K)/Akt pathway but does not involve the virus receptor HYAL2, and the other seems to involve Env binding to HYAL2, HYAL2 degradation, and activation of the MST1R receptor tyrosine kinase, which is normally suppressed by HYAL2. This is Envelope glycoprotein (env) from Ovis aries (Sheep).